Consider the following 185-residue polypeptide: Ribonuclease M5 1 (185 aa).

The 84-residue stretch at 4 to 87 (KEVIVVEGKD…AFLTKHDAAP (84 aa)) folds into the Toprim domain. Mg(2+) contacts are provided by E10, D56, and D58.

This sequence belongs to the ribonuclease M5 family. Mg(2+) serves as cofactor.

It localises to the cytoplasm. It carries out the reaction Endonucleolytic cleavage of RNA, removing 21 and 42 nucleotides, respectively, from the 5'- and 3'-termini of a 5S-rRNA precursor.. Functionally, required for correct processing of both the 5' and 3' ends of 5S rRNA precursor. Cleaves both sides of a double-stranded region yielding mature 5S rRNA in one step. The protein is Ribonuclease M5 1 of Ligilactobacillus salivarius (strain UCC118) (Lactobacillus salivarius).